Reading from the N-terminus, the 377-residue chain is Nitric oxide reductase FlRd-NAD(+) reductase (377 aa).

The protein belongs to the FAD-dependent oxidoreductase family. Requires FAD as cofactor.

It is found in the cytoplasm. It carries out the reaction 2 reduced [nitric oxide reductase rubredoxin domain] + NAD(+) + H(+) = 2 oxidized [nitric oxide reductase rubredoxin domain] + NADH. It functions in the pathway nitrogen metabolism; nitric oxide reduction. In terms of biological role, one of at least two accessory proteins for anaerobic nitric oxide (NO) reductase. Reduces the rubredoxin moiety of NO reductase. This is Nitric oxide reductase FlRd-NAD(+) reductase from Escherichia coli O139:H28 (strain E24377A / ETEC).